A 63-amino-acid chain; its full sequence is RICHSQMSSQPPTTTFCRVNSCYRRTLRDPHDPRGTIIVRGCGCPRMKPGTKLECCTSDKCNV.

Cystine bridges form between Cys-3–Cys-22, Cys-17–Cys-42, Cys-44–Cys-55, and Cys-56–Cys-61.

It belongs to the three-finger toxin family. Short-chain subfamily. Type B muscarinic toxin sub-subfamily. As to quaternary structure, monomer. In terms of tissue distribution, expressed by the venom gland.

It is found in the secreted. In terms of biological role, blocks M2 muscarinic acetylcholine receptors (CHRM2). Fully blocks the binding of N-methylscopolamine (NMS) and oxotremorine-M to M2 receptors, slightly increased NMS binding to M1 receptors. This chain is Muscarinic toxin 2, found in Dendroaspis angusticeps (Eastern green mamba).